A 332-amino-acid polypeptide reads, in one-letter code: Protein phosphatase PTC7 homolog fig (332 aa).

Residues Lys-70–Val-325 enclose the PPM-type phosphatase domain. Asp-102, Gly-103, and Asp-247 together coordinate Mn(2+).

It belongs to the PP2C family. The cofactor is Mg(2+). Mn(2+) is required as a cofactor.

The catalysed reaction is O-phospho-L-seryl-[protein] + H2O = L-seryl-[protein] + phosphate. It carries out the reaction O-phospho-L-threonyl-[protein] + H2O = L-threonyl-[protein] + phosphate. This is Protein phosphatase PTC7 homolog fig from Drosophila ananassae (Fruit fly).